The following is a 346-amino-acid chain: Tetraacyldisaccharide 4'-kinase (346 aa).

Position 54–61 (54–61 (TVGGAGKT)) interacts with ATP.

Belongs to the LpxK family.

It carries out the reaction a lipid A disaccharide + ATP = a lipid IVA + ADP + H(+). It participates in glycolipid biosynthesis; lipid IV(A) biosynthesis; lipid IV(A) from (3R)-3-hydroxytetradecanoyl-[acyl-carrier-protein] and UDP-N-acetyl-alpha-D-glucosamine: step 6/6. Its function is as follows. Transfers the gamma-phosphate of ATP to the 4'-position of a tetraacyldisaccharide 1-phosphate intermediate (termed DS-1-P) to form tetraacyldisaccharide 1,4'-bis-phosphate (lipid IVA). The protein is Tetraacyldisaccharide 4'-kinase of Sinorhizobium medicae (strain WSM419) (Ensifer medicae).